A 359-amino-acid polypeptide reads, in one-letter code: GTP cyclohydrolase FolE2 (359 aa).

Belongs to the GTP cyclohydrolase IV family.

The catalysed reaction is GTP + H2O = 7,8-dihydroneopterin 3'-triphosphate + formate + H(+). It functions in the pathway cofactor biosynthesis; 7,8-dihydroneopterin triphosphate biosynthesis; 7,8-dihydroneopterin triphosphate from GTP: step 1/1. Converts GTP to 7,8-dihydroneopterin triphosphate. The chain is GTP cyclohydrolase FolE2 from Cereibacter sphaeroides (strain KD131 / KCTC 12085) (Rhodobacter sphaeroides).